The sequence spans 255 residues: MLTKRIIACLDVKDGRVVKGMQFKNHEDMGDVIELAKFYSQNGIDELVFYDITASAKNERINRAWVSKVAQNISIPFCVAGGIKSEDDAKELLANGADKISINSPALNDPDLISRLAKSFGVQCVVVGIDTFKDENNELLVYKYTGDENKSHHSGKKTLEWVKQVCELGAGEIVLNMMNQDGMRKGYDLDQLTKVRQICPVPLVASGGAGAKEHFLDAFKLGVDGALAASVFHKKLIDIKELKLFLKDQGIQIRI.

Active-site residues include Asp-11 and Asp-130.

Belongs to the HisA/HisF family. Heterodimer of HisH and HisF.

It localises to the cytoplasm. The enzyme catalyses 5-[(5-phospho-1-deoxy-D-ribulos-1-ylimino)methylamino]-1-(5-phospho-beta-D-ribosyl)imidazole-4-carboxamide + L-glutamine = D-erythro-1-(imidazol-4-yl)glycerol 3-phosphate + 5-amino-1-(5-phospho-beta-D-ribosyl)imidazole-4-carboxamide + L-glutamate + H(+). Its pathway is amino-acid biosynthesis; L-histidine biosynthesis; L-histidine from 5-phospho-alpha-D-ribose 1-diphosphate: step 5/9. Its function is as follows. IGPS catalyzes the conversion of PRFAR and glutamine to IGP, AICAR and glutamate. The HisF subunit catalyzes the cyclization activity that produces IGP and AICAR from PRFAR using the ammonia provided by the HisH subunit. The sequence is that of Imidazole glycerol phosphate synthase subunit HisF from Campylobacter lari (strain RM2100 / D67 / ATCC BAA-1060).